Here is a 515-residue protein sequence, read N- to C-terminus: 2-isopropylmalate synthase (515 aa).

Residues 4-266 form the Pyruvate carboxyltransferase domain; it reads INIFDTTLRD…ETRLNLQEIK (263 aa). Mn(2+) contacts are provided by aspartate 13, histidine 201, histidine 203, and asparagine 237. The tract at residues 391–515 is regulatory domain; it reads QLSSLQVQYG…RAENQKVAMQ (125 aa).

Belongs to the alpha-IPM synthase/homocitrate synthase family. LeuA type 1 subfamily. Homodimer. Mn(2+) serves as cofactor.

Its subcellular location is the cytoplasm. The enzyme catalyses 3-methyl-2-oxobutanoate + acetyl-CoA + H2O = (2S)-2-isopropylmalate + CoA + H(+). It participates in amino-acid biosynthesis; L-leucine biosynthesis; L-leucine from 3-methyl-2-oxobutanoate: step 1/4. Catalyzes the condensation of the acetyl group of acetyl-CoA with 3-methyl-2-oxobutanoate (2-ketoisovalerate) to form 3-carboxy-3-hydroxy-4-methylpentanoate (2-isopropylmalate). In Geobacillus sp. (strain WCH70), this protein is 2-isopropylmalate synthase.